The chain runs to 378 residues: MYKLDLAPDPKELAAIEARRNREKERQCRFFNVRNRVMGVDVEALNYQVEERKFREAIERSKDMAYGAKHAHYDLVAQMLEKEEAERACRLSKRVQDFREQRQQFKNGHEFDFWDPDHVQEFQVPYYENEAYFGPASMQYFLGEDLERASHLRMQQEQLRYNLEKQLQEQQAAREEEARAALLSDQLRLAADTRAAELARLEESCRAAMRTAMANANKAQAAKQALLQRREQQQQQEANLAEIKKQVTSDLLTENPQVAQRPSAPHRVLPYCWKGMTAEQRAAIRKTQENQRQEKKEQRQAEKLVEAEWGSQSKRLAEAALELEEQERELCAEFRRGLGSFNRELAKEQHAQQNYLNSVIYTNQPTSHYYLQFNTSSR.

Coiled coils occupy residues 153-250 (RMQQ…VTSD) and 279-334 (EQRA…CAEF).

It belongs to the RIB43A family. In terms of assembly, microtubule inner protein component of sperm flagellar doublet microtubules.

It is found in the cytoplasm. It localises to the cytoskeleton. Its subcellular location is the flagellum axoneme. This chain is RIB43A-like with coiled-coils protein 1 (Ribc1), found in Rattus norvegicus (Rat).